Consider the following 193-residue polypeptide: dCTP deaminase (193 aa).

Residues 110-115 (RSSLAR), aspartate 128, 136-138 (VLE), tyrosine 171, lysine 178, and glutamine 182 each bind dCTP. The Proton donor/acceptor role is filled by glutamate 138. The tract at residues 169–193 (RPYNSRQDAKYRGQQGAVASRIDKD) is disordered.

The protein belongs to the dCTP deaminase family. As to quaternary structure, homotrimer.

The enzyme catalyses dCTP + H2O + H(+) = dUTP + NH4(+). Its pathway is pyrimidine metabolism; dUMP biosynthesis; dUMP from dCTP (dUTP route): step 1/2. Catalyzes the deamination of dCTP to dUTP. The sequence is that of dCTP deaminase from Yersinia pestis bv. Antiqua (strain Antiqua).